The sequence spans 187 residues: GTP cyclohydrolase 1 (187 aa).

Zn(2+)-binding residues include Cys76, His79, and Cys148.

The protein belongs to the GTP cyclohydrolase I family. In terms of assembly, toroid-shaped homodecamer, composed of two pentamers of five dimers.

The enzyme catalyses GTP + H2O = 7,8-dihydroneopterin 3'-triphosphate + formate + H(+). The protein operates within cofactor biosynthesis; 7,8-dihydroneopterin triphosphate biosynthesis; 7,8-dihydroneopterin triphosphate from GTP: step 1/1. This is GTP cyclohydrolase 1 from Acetivibrio thermocellus (strain ATCC 27405 / DSM 1237 / JCM 9322 / NBRC 103400 / NCIMB 10682 / NRRL B-4536 / VPI 7372) (Clostridium thermocellum).